A 143-amino-acid chain; its full sequence is D-aminoacyl-tRNA deacylase (143 aa).

The short motif at 135 to 136 is the Gly-cisPro motif, important for rejection of L-amino acids element; the sequence is GP.

The protein belongs to the DTD family. As to quaternary structure, homodimer.

The protein resides in the cytoplasm. It catalyses the reaction glycyl-tRNA(Ala) + H2O = tRNA(Ala) + glycine + H(+). The enzyme catalyses a D-aminoacyl-tRNA + H2O = a tRNA + a D-alpha-amino acid + H(+). In terms of biological role, an aminoacyl-tRNA editing enzyme that deacylates mischarged D-aminoacyl-tRNAs. Also deacylates mischarged glycyl-tRNA(Ala), protecting cells against glycine mischarging by AlaRS. Acts via tRNA-based rather than protein-based catalysis; rejects L-amino acids rather than detecting D-amino acids in the active site. By recycling D-aminoacyl-tRNA to D-amino acids and free tRNA molecules, this enzyme counteracts the toxicity associated with the formation of D-aminoacyl-tRNA entities in vivo and helps enforce protein L-homochirality. This Mycolicibacterium gilvum (strain PYR-GCK) (Mycobacterium gilvum (strain PYR-GCK)) protein is D-aminoacyl-tRNA deacylase.